Reading from the N-terminus, the 275-residue chain is Dermonecrotic toxin SpaSicTox-betaIIA1 (275 aa).

H5 is a catalytic residue. Residues E25 and D27 each contribute to the Mg(2+) site. H41 serves as the catalytic Nucleophile. 2 cysteine pairs are disulfide-bonded: C45-C51 and C47-C190. D85 contacts Mg(2+).

The protein belongs to the arthropod phospholipase D family. Class II subfamily. The cofactor is Mg(2+). As to expression, expressed by the venom gland.

Its subcellular location is the secreted. The catalysed reaction is an N-(acyl)-sphingosylphosphocholine = an N-(acyl)-sphingosyl-1,3-cyclic phosphate + choline. It catalyses the reaction an N-(acyl)-sphingosylphosphoethanolamine = an N-(acyl)-sphingosyl-1,3-cyclic phosphate + ethanolamine. The enzyme catalyses a 1-acyl-sn-glycero-3-phosphocholine = a 1-acyl-sn-glycero-2,3-cyclic phosphate + choline. It carries out the reaction a 1-acyl-sn-glycero-3-phosphoethanolamine = a 1-acyl-sn-glycero-2,3-cyclic phosphate + ethanolamine. Functionally, dermonecrotic toxins cleave the phosphodiester linkage between the phosphate and headgroup of certain phospholipids (sphingolipid and lysolipid substrates), forming an alcohol (often choline) and a cyclic phosphate. This toxin acts on sphingomyelin (SM). It may also act on ceramide phosphoethanolamine (CPE), lysophosphatidylcholine (LPC) and lysophosphatidylethanolamine (LPE), but not on lysophosphatidylserine (LPS), and lysophosphatidylglycerol (LPG). It acts by transphosphatidylation, releasing exclusively cyclic phosphate products as second products. Induces dermonecrosis, hemolysis, increased vascular permeability, edema, inflammatory response, and platelet aggregation. This Sicarius patagonicus (Six-eyed sand spider) protein is Dermonecrotic toxin SpaSicTox-betaIIA1.